The following is a 485-amino-acid chain: Glutamate--tRNA ligase (485 aa).

The short motif at 11-21 is the 'HIGH' region element; sequence PSPTGHLHIGN. Residues 252-256 carry the 'KMSKS' region motif; that stretch reads KLSKR. Lys255 contributes to the ATP binding site.

The protein belongs to the class-I aminoacyl-tRNA synthetase family. Glutamate--tRNA ligase type 1 subfamily. Monomer.

The protein resides in the cytoplasm. It carries out the reaction tRNA(Glu) + L-glutamate + ATP = L-glutamyl-tRNA(Glu) + AMP + diphosphate. Functionally, catalyzes the attachment of glutamate to tRNA(Glu) in a two-step reaction: glutamate is first activated by ATP to form Glu-AMP and then transferred to the acceptor end of tRNA(Glu). The polypeptide is Glutamate--tRNA ligase (Bacillus thuringiensis (strain Al Hakam)).